The sequence spans 84 residues: Coiled-coil-helix-coiled-coil-helix domain-containing protein 7 (84 aa).

Residues 12–54 form the CHCH domain; the sequence is SNPCLEETDASTKCMDENQYQKDLCTSYFIKYKNCRKFWNGIM. 2 short sequence motifs (cx9C motif) span residues 15-25 and 36-46; these read CLEETDASTKC and CTSYFIKYKNC. 2 cysteine pairs are disulfide-bonded: C15–C46 and C25–C36.

Belongs to the CHCHD7 family.

Its subcellular location is the mitochondrion intermembrane space. This Xenopus laevis (African clawed frog) protein is Coiled-coil-helix-coiled-coil-helix domain-containing protein 7 (chchd7).